The following is a 348-amino-acid chain: Protein RecA (348 aa).

64-71 (GPESSGKT) lines the ATP pocket. The segment covering 325–335 (YEIDGASKEPL) has biased composition (basic and acidic residues). Residues 325 to 348 (YEIDGASKEPLEETEETLSLLDDE) are disordered. A compositionally biased stretch (acidic residues) spans 336–348 (EETEETLSLLDDE).

It belongs to the RecA family.

The protein localises to the cytoplasm. Functionally, can catalyze the hydrolysis of ATP in the presence of single-stranded DNA, the ATP-dependent uptake of single-stranded DNA by duplex DNA, and the ATP-dependent hybridization of homologous single-stranded DNAs. It interacts with LexA causing its activation and leading to its autocatalytic cleavage. This Listeria seeligeri protein is Protein RecA.